We begin with the raw amino-acid sequence, 380 residues long: Succinyl-diaminopimelate desuccinylase (380 aa).

His-70 contributes to the Zn(2+) binding site. Asp-72 is an active-site residue. Residue Asp-103 participates in Zn(2+) binding. The active-site Proton acceptor is the Glu-137. Zn(2+) contacts are provided by Glu-138, Glu-166, and His-352.

Belongs to the peptidase M20A family. DapE subfamily. In terms of assembly, homodimer. The cofactor is Zn(2+). Co(2+) serves as cofactor.

It carries out the reaction N-succinyl-(2S,6S)-2,6-diaminopimelate + H2O = (2S,6S)-2,6-diaminopimelate + succinate. The protein operates within amino-acid biosynthesis; L-lysine biosynthesis via DAP pathway; LL-2,6-diaminopimelate from (S)-tetrahydrodipicolinate (succinylase route): step 3/3. In terms of biological role, catalyzes the hydrolysis of N-succinyl-L,L-diaminopimelic acid (SDAP), forming succinate and LL-2,6-diaminopimelate (DAP), an intermediate involved in the bacterial biosynthesis of lysine and meso-diaminopimelic acid, an essential component of bacterial cell walls. This is Succinyl-diaminopimelate desuccinylase from Azoarcus sp. (strain BH72).